The chain runs to 194 residues: Small ribosomal subunit protein uS4c (194 aa).

The S4 RNA-binding domain maps to 82–143 (MRLDNILFRL…KERSKVLIQN (62 aa)).

Belongs to the universal ribosomal protein uS4 family. In terms of assembly, part of the 30S ribosomal subunit. Contacts protein S5. The interaction surface between S4 and S5 is involved in control of translational fidelity.

Its subcellular location is the plastid. The protein resides in the chloroplast. One of the primary rRNA binding proteins, it binds directly to 16S rRNA where it nucleates assembly of the body of the 30S subunit. In terms of biological role, with S5 and S12 plays an important role in translational accuracy. The chain is Small ribosomal subunit protein uS4c (rps4) from Trimezia steyermarkii (Steyermark's trimezia).